A 493-amino-acid polypeptide reads, in one-letter code: MPDHKEEKIRVYRNPAKNEEYFKNRVGMGTSYDVGVRKLTILDKEIQLYYLNGLCDTAYIIHLMRELVAINNRKEDPDELVDIVENRLLNAQVEKVKTLDETTDQVLSGLVAVIVEGAGFAFIIDVRSYPGRNPEEPDTEKVVRGARDGFVENIVVNTALLRRRIRDERLRVKMTKVGERSKTDLSICYIEDIADPDLVEIVEKEIASIDVDGLTMADKTVEEFIVNQSYNPFPLVRYTERPDVAANHVLEGHVIIIVDTSPSVIITPTTLFHHVQHAEEYRQAPSVGTFLRWVRFFGILASTLFLPIWFLFVLQPDLLPDNMKFIGLNKDTHIPIILQIFLADLGIEFLRMAAIHTPTALSTAMGLIAAVLIGQIAIEVGLFSPEVILYVSLAAIGTFTTPSYELSLANKMSRLVLMILVALFHIKGLVIGFTVLIIAMASIKSLQTPYLWPLIPFNGKALWQVLVRTAKPGAKVRPSIVHPKNRLRQPTNS.

The next 5 helical transmembrane spans lie at 296–316, 334–354, 363–383, 387–407, and 418–438; these read FFGI…VLQP, IPII…RMAA, TAMG…VGLF, VILY…YELS, and MILV…VLII.

The protein belongs to the GerABKA family.

Its subcellular location is the cell membrane. This is Stage V sporulation protein AF (spoVAF) from Bacillus subtilis (strain 168).